Reading from the N-terminus, the 1033-residue chain is Integrin alpha-IIb (1033 aa).

The first 31 residues, 1–31, serve as a signal peptide directing secretion; sequence MARASCAWHSLWLLQWTPLFLGPSAVPPVWA. Over 32 to 988 the chain is Extracellular; it reads LNLDSEKFSV…TQLLRALEER (957 aa). 7 FG-GAP repeats span residues 35–96, 109–173, 184–237, 252–304, 305–370, 372–431, and 434–495; these read DSEK…GGKC, NLGF…GRAE, SVYA…ISSY, TYDN…DSYY, QPLH…PQAL, TPTL…GLSP, and SQVL…VQDS. 2 N-linked (GlcNAc...) asparagine glycosylation sites follow: asparagine 46 and asparagine 75. Cystine bridges form between cysteine 87/cysteine 96, cysteine 138/cysteine 161, and cysteine 177/cysteine 197. Positions 273, 275, 277, 280, 282, 327, 329, 331, 333, 335, 395, 399, 401, 403, 456, 458, 460, 462, and 464 each coordinate Ca(2+). Intrachain disulfides connect cysteine 503–cysteine 514 and cysteine 520–cysteine 575. Asparagine 600 is a glycosylation site (N-linked (GlcNAc...) asparagine). Intrachain disulfides connect cysteine 632–cysteine 638, cysteine 704–cysteine 717, cysteine 856–cysteine 916, and cysteine 905–cysteine 911. Asparagine 710 carries N-linked (GlcNAc...) asparagine glycosylation. The N-linked (GlcNAc...) asparagine glycan is linked to asparagine 957. A helical transmembrane segment spans residues 989–1014; that stretch reads AIPVWWVLVGVLGGLLLLTLLVLAMW. Residues 1015–1033 are Cytoplasmic-facing; it reads KAGFFKRNRPPLEEDEEEE. The GFFKR motif motif lies at 1017–1021; that stretch reads GFFKR.

The protein belongs to the integrin alpha chain family. Heterodimer of an alpha and a beta subunit. The alpha subunit is composed of a heavy and a light chain linked by a disulfide bond. Alpha-IIb associates with beta-3. Directly interacts with RNF181. Interacts (via C-terminus cytoplasmic tail region) with CIB1; the interaction is direct and calcium-dependent. Interacts (via C-terminus cytoplasmic tail region) with CIB2, CIB3 and CIB4; the interactions are stabilized/increased in a calcium and magnesium-dependent manner. ITGA2B:ITGB3 interacts with PPIA/CYPA; the interaction is ROS and PPIase activity-dependent and is increased in the presence of thrombin. ITGA2B:ITGB3 interacts with SELP (via C-type lectin domain); the interaction mediates cell-cell interaction and adhesion. In terms of processing, cleaved by ELANE; the cleavage promotes activation of platelet fibrinogen receptor integrin alpha-IIb/beta-3.

It localises to the membrane. In terms of biological role, integrin alpha-IIb/beta-3 is a receptor for fibronectin, fibrinogen, plasminogen, prothrombin, thrombospondin and vitronectin. It recognizes the sequence R-G-D in a wide array of ligands. It recognizes the sequence H-H-L-G-G-G-A-K-Q-A-G-D-V in fibrinogen gamma chain. Following activation integrin alpha-IIb/beta-3 brings about platelet/platelet interaction through binding of soluble fibrinogen. This step leads to rapid platelet aggregation which physically plugs ruptured endothelial cell surface. The protein is Integrin alpha-IIb (Itga2b) of Mus musculus (Mouse).